The primary structure comprises 118 residues: uncharacterized protein (118 aa).

Belongs to the transposase IS3/IS150/IS904 family.

This is an uncharacterized protein from Haemophilus influenzae (strain ATCC 51907 / DSM 11121 / KW20 / Rd).